The following is a 475-amino-acid chain: Probable pectate lyase 7 (475 aa).

A signal peptide spans 1–24 (METARLFKLVCVICIASLIPTIRA). Residues asparagine 67 and asparagine 96 are each glycosylated (N-linked (GlcNAc...) asparagine). The interval 91–117 (ISSPTNSTRRSLTGRGKGKGKGKWSKL) is disordered. Aspartate 271, aspartate 295, and aspartate 299 together coordinate Ca(2+). The active site involves arginine 351.

It belongs to the polysaccharide lyase 1 family. Ca(2+) is required as a cofactor.

The enzyme catalyses Eliminative cleavage of (1-&gt;4)-alpha-D-galacturonan to give oligosaccharides with 4-deoxy-alpha-D-galact-4-enuronosyl groups at their non-reducing ends.. The protein operates within glycan metabolism; pectin degradation; 2-dehydro-3-deoxy-D-gluconate from pectin: step 2/5. This is Probable pectate lyase 7 from Arabidopsis thaliana (Mouse-ear cress).